The chain runs to 316 residues: ATP synthase gamma chain (316 aa).

It belongs to the ATPase gamma chain family. In terms of assembly, F-type ATPases have 2 components, CF(1) - the catalytic core - and CF(0) - the membrane proton channel. CF(1) has five subunits: alpha(3), beta(3), gamma(1), delta(1), epsilon(1). CF(0) has three main subunits: a, b and c.

It is found in the cellular thylakoid membrane. In terms of biological role, produces ATP from ADP in the presence of a proton gradient across the membrane. The gamma chain is believed to be important in regulating ATPase activity and the flow of protons through the CF(0) complex. The sequence is that of ATP synthase gamma chain from Parasynechococcus marenigrum (strain WH8102).